We begin with the raw amino-acid sequence, 585 residues long: Probable monoterpene synthase MTS1, chloroplastic (585 aa).

The segment at M1–V29 is disordered. The transit peptide at M1–R31 directs the protein to the chloroplast. The span at S15–G25 shows a compositional bias: polar residues. The (2E)-geranyl diphosphate site is built by R298, D335, D339, R476, and D479. Residues D335 and D339 each contribute to the Mg(2+) site. The short motif at D335–D339 is the DDXXD motif element. Mg(2+) contacts are provided by D479, T483, and E487.

The protein belongs to the terpene synthase family. Tpsb subfamily. Mg(2+) serves as cofactor. The cofactor is Mn(2+). Expressed in trichomes. Detected in flowers, but not in leaves.

The protein resides in the plastid. Its subcellular location is the chloroplast. The chain is Probable monoterpene synthase MTS1, chloroplastic from Humulus lupulus (European hop).